Here is a 76-residue protein sequence, read N- to C-terminus: CLAVATA3/ESR (CLE)-related protein 46 (76 aa).

The signal sequence occupies residues 1 to 26 (MRRHDIIIKLLLLMCLLLSRFVTREC). Residues 53 to 76 (EEKKWHKHPSGPNPTGNRHPPVKH) are disordered. Residues Pro-61 and Pro-64 each carry the hydroxyproline modification. O-linked (Ara...) hydroxyproline glycosylation occurs at Pro-64.

The protein belongs to the CLV3/ESR signal peptide family. In terms of processing, the O-glycosylation (arabinosylation) of the hydroxyproline Pro-64 enhances binding affinity of the CLE46p peptide for its receptor.

The protein resides in the secreted. Its subcellular location is the extracellular space. Functionally, extracellular signal peptide that regulates cell fate. In Arabidopsis thaliana (Mouse-ear cress), this protein is CLAVATA3/ESR (CLE)-related protein 46.